Reading from the N-terminus, the 244-residue chain is 5-oxoprolinase subunit A (244 aa).

This sequence belongs to the LamB/PxpA family. In terms of assembly, forms a complex composed of PxpA, PxpB and PxpC.

The catalysed reaction is 5-oxo-L-proline + ATP + 2 H2O = L-glutamate + ADP + phosphate + H(+). Functionally, catalyzes the cleavage of 5-oxoproline to form L-glutamate coupled to the hydrolysis of ATP to ADP and inorganic phosphate. The polypeptide is 5-oxoprolinase subunit A (Escherichia coli O17:K52:H18 (strain UMN026 / ExPEC)).